Reading from the N-terminus, the 228-residue chain is Leucyl/phenylalanyl-tRNA--protein transferase (228 aa).

This sequence belongs to the L/F-transferase family.

Its subcellular location is the cytoplasm. It catalyses the reaction N-terminal L-lysyl-[protein] + L-leucyl-tRNA(Leu) = N-terminal L-leucyl-L-lysyl-[protein] + tRNA(Leu) + H(+). The enzyme catalyses N-terminal L-arginyl-[protein] + L-leucyl-tRNA(Leu) = N-terminal L-leucyl-L-arginyl-[protein] + tRNA(Leu) + H(+). It carries out the reaction L-phenylalanyl-tRNA(Phe) + an N-terminal L-alpha-aminoacyl-[protein] = an N-terminal L-phenylalanyl-L-alpha-aminoacyl-[protein] + tRNA(Phe). Its function is as follows. Functions in the N-end rule pathway of protein degradation where it conjugates Leu, Phe and, less efficiently, Met from aminoacyl-tRNAs to the N-termini of proteins containing an N-terminal arginine or lysine. The protein is Leucyl/phenylalanyl-tRNA--protein transferase of Thiobacillus denitrificans (strain ATCC 25259 / T1).